The chain runs to 273 residues: Chlorophyll a-b binding protein 8, chloroplastic (273 aa).

A chloroplast-targeting transit peptide spans 1–32; that stretch reads MATQALISSSSISTSAEAARQIIGSRISQSVT. At arginine 33 the chain carries N2-acetylarginine. Tryptophan 56 contributes to the chlorophyll b binding site. Chlorophyll a is bound by residues phenylalanine 76, serine 82, and glutamate 100. A chlorophyll b-binding site is contributed by arginine 105. The helical transmembrane segment at 106 to 126 threads the bilayer; the sequence is FAMLGAAGAIAPEILGKAGLI. Residues isoleucine 140, glutamate 167, and arginine 170 each coordinate chlorophyll b. Residues lysine 224, glutamate 225, asparagine 228, arginine 230, glutamine 242, and histidine 257 each coordinate chlorophyll a. The helical transmembrane segment at 231–251 threads the bilayer; it reads LAMLAILGYFIQALVTGVGPY.

Belongs to the light-harvesting chlorophyll a/b-binding (LHC) protein family. In terms of assembly, the LHC complex consists of chlorophyll a-b binding proteins. Binds at least 14 chlorophylls (8 Chl-a and 6 Chl-b) and carotenoids such as lutein and neoxanthin. is required as a cofactor. Post-translationally, photoregulated by reversible phosphorylation of its threonine residues.

Its subcellular location is the plastid. The protein localises to the chloroplast thylakoid membrane. Functionally, the light-harvesting complex (LHC) functions as a light receptor, it captures and delivers excitation energy to photosystems with which it is closely associated. This is Chlorophyll a-b binding protein 8, chloroplastic (CAB8) from Solanum lycopersicum (Tomato).